The following is a 1188-amino-acid chain: DNA-directed RNA polymerase II subunit 2 (1188 aa).

Residue Asp800 coordinates Mg(2+). 2 disordered regions span residues 852–871 and 877–897; these read SYDK…VSGE and KTTP…TRRD. A compositionally biased stretch (polar residues) spans 879-892; sequence TPISQDEAQGQSSR. 4 residues coordinate Zn(2+): Cys1124, Cys1127, Cys1142, and Cys1145. A C4-type zinc finger spans residues 1124–1145; the sequence is CEVCGLIAIANLKKNSFECRGC.

This sequence belongs to the RNA polymerase beta chain family. In terms of assembly, component of the RNA polymerase II complex consisting of at least 12 subunits.

The protein localises to the nucleus. It catalyses the reaction RNA(n) + a ribonucleoside 5'-triphosphate = RNA(n+1) + diphosphate. DNA-dependent RNA polymerase catalyzes the transcription of DNA into RNA using the four ribonucleoside triphosphates as substrates. Second largest component of RNA polymerase II which synthesizes mRNA precursors and many functional non-coding RNAs. Proposed to contribute to the polymerase catalytic activity and forms the polymerase active center together with the largest subunit. Pol II is the central component of the basal RNA polymerase II transcription machinery. It is composed of mobile elements that move relative to each other. NRPB2 is part of the core element with the central large cleft, the clamp element that moves to open and close the cleft and the jaws that are thought to grab the incoming DNA template. Functionally, essential for the completion of the three rounds of mitosis in female megaspores required for the development of mature gametophytes. The chain is DNA-directed RNA polymerase II subunit 2 (NRPB2) from Arabidopsis thaliana (Mouse-ear cress).